We begin with the raw amino-acid sequence, 156 residues long: Protein-export protein SecB (156 aa).

Belongs to the SecB family. In terms of assembly, homotetramer, a dimer of dimers. One homotetramer interacts with 1 SecA dimer.

The protein localises to the cytoplasm. Its function is as follows. One of the proteins required for the normal export of preproteins out of the cell cytoplasm. It is a molecular chaperone that binds to a subset of precursor proteins, maintaining them in a translocation-competent state. It also specifically binds to its receptor SecA. The polypeptide is Protein-export protein SecB (Aliivibrio fischeri (strain ATCC 700601 / ES114) (Vibrio fischeri)).